The sequence spans 2391 residues: Filaggrin-2 (2391 aa).

Positions 1 to 81 are S-100-like; the sequence is MTDLLRSVVT…TEFLLMIFKL (81 aa). 2 consecutive EF-hand domains span residues 8 to 43 and 49 to 84; these read VVTV…ELHP and DDPD…LTMA. Ca(2+) is bound by residues D62, D64, D66, R68, and E73. Disordered regions lie at residues 96–275, 349–369, and 406–2391; these read ASGS…DSGR, SYSQ…CGGQ, and NSSS…LSRH. Residues 98–107 show a composition bias toward basic residues; that stretch reads GSKKHRRGHR. The span at 111–121 shows a compositional bias: acidic residues; that stretch reads EESETEEDEED. Positions 149–163 are enriched in basic residues; the sequence is GTVKCRHGSNSRRLG. A compositionally biased stretch (polar residues) spans 166–176; the sequence is GNLSSSGNQEG. The segment covering 193 to 209 has biased composition (basic and acidic residues); that stretch reads GKDRHGSSSVELRERIN. The Filaggrin 1 repeat unit spans residues 245 to 289; it reads ETSGHESNSTQSRIREQKLGSSCSGSGDSGRRSHACGYSNSSGCG. Composition is skewed to polar residues over residues 420–442 and 449–476; these read GSGS…SSGF and SGQT…SGKT. Residues 421 to 466 form a Filaggrin 2 repeat; that stretch reads SGSSQSTSFEQHGTGLSQSSGFEQHVCGSGQTCGQHESTSSQSLGY. Gly residues predominate over residues 480–507; that stretch reads GQHGSGSGQSSGFGQCGSGSGQSSGFGQ. A compositionally biased stretch (low complexity) spans 508-562; sequence HGSVSGQSSGFGQHGSVSGQSSGFGQHESRSRQSSYGQHGSGSSQSSGYGQYGSR. The span at 568 to 604 shows a compositional bias: gly residues; it reads GQHGLGSGQSTGFGQYGSGSGQSSGFGQHGSGSGQSS. The segment covering 605 to 655 has biased composition (low complexity); sequence GFGQHESRSGQSSYGQHSSGSSQSSGYGQHGSRQTSGFGQHGSGSSQSTGF. The span at 656-666 shows a compositional bias: gly residues; sequence GQYGSGSGQSS. The span at 667–734 shows a compositional bias: low complexity; sequence GFGQHVSGSG…SSGQSSSFGQ (68 aa). Over residues 735–756 the composition is skewed to gly residues; sequence HGSGSGQSSGFGQHGSGSGQSS. Positions 757–807 are enriched in low complexity; it reads GFGQHESRSGQSSYGQHSSGSSQSSGYGQHGSRQTSGFGQHGSGSSQSTGF. Positions 808-831 are enriched in gly residues; sequence GQYGSGSGQSAGFGQHGSGSGQSS. Residues 832-884 are compositionally biased toward low complexity; the sequence is GFGQHESRSHQSSYGQHGSGSSQSSGYGQHGSSSGQTSGFGQHRSSSGQYSGF. Residues 885 to 908 show a composition bias toward gly residues; it reads GQHGSGSGQSSGFGQHGTGSGQYS. Residues 918–956 are compositionally biased toward low complexity; it reads HQSSYGQHGSGSSQSSGYGQHGSSSGQTFGFGQHRSGSG. The span at 957-972 shows a compositional bias: gly residues; it reads QSSGFGQHGSGSGQSS. 2 stretches are compositionally biased toward low complexity: residues 973–982 and 994–1027; these read GFGQHESGSG and SSQS…GFGQ. A Filaggrin 3 repeat occupies 1019-1051; that stretch reads SGQTTGFGQHRSSSGQYSGFGQHGSGSDQSSGF. A compositionally biased stretch (gly residues) spans 1052–1062; that stretch reads GQHGTGSGQSS. Over residues 1063-1098 the composition is skewed to low complexity; it reads GFGQYESRSRQSSYGQHGSGSSQSSGYGQHGSNSGQ. One copy of the Filaggrin 4 repeat lies at 1097 to 1141; it reads GQTSGFGQHRPGSGQSSGFGQYGSGSGQSSGFGQHGSGTGKSSGF. A compositionally biased stretch (gly residues) spans 1111 to 1137; sequence QSSGFGQYGSGSGQSSGFGQHGSGTGK. Residues 1148 to 1174 show a composition bias toward low complexity; it reads SGQSSYGQHGTGSSQSSGCGQHESGSG. Over residues 1175 to 1198 the composition is skewed to polar residues; sequence PTTSFGQHVSGSDNFSSSGQHISD. Positions 1206–1220 are enriched in gly residues; it reads GQYGSGSGQSTGLGQ. Positions 1226 to 1249 are enriched in polar residues; it reads VESGSTVHGRQETTHGQTINTTRH. Over residues 1250 to 1263 the composition is skewed to low complexity; that stretch reads SQSGQGQSTQTGSR. Residue S1276 is modified to Phosphoserine. Polar residues predominate over residues 1329–1343; it reads HGQSTQTGSRTSGRQ. Over residues 1346–1355 the composition is skewed to basic and acidic residues; it reads SHSDATDSEV. Residues 1366–1377 show a composition bias toward polar residues; it reads QEQTHSQAGSQH. Residues 1378 to 1390 are compositionally biased toward basic and acidic residues; the sequence is GESESTVHERHET. Positions 1406–1416 are enriched in low complexity; sequence HGQSTQRGSRT. 2 positions are modified to phosphoserine: S1427 and S1428. The span at 1439 to 1459 shows a compositional bias: polar residues; it reads RPQSQEQTHGQAGSQHGESGS. A Filaggrin 5 repeat occupies 1455–1510; sequence GESGSTVHGRHGTTHGQTGDTTRHAHYHHGKSTQRGSSTTGRRGSGHSESSDSEVH. Low complexity predominate over residues 1487–1496; the sequence is TQRGSSTTGR. 2 positions are modified to phosphoserine: S1504 and S1505. Residues 1510 to 1529 are compositionally biased toward low complexity; sequence HSGGSHTHSGHTHGQSGSQH. Residues 1544–1559 are compositionally biased toward polar residues; that stretch reads HGQTGDTTRHSYSGHE. The span at 1560–1572 shows a compositional bias: low complexity; it reads QTTQTGSRTTGRQ. Basic and acidic residues-rich tracts occupy residues 1575–1584 and 1605–1618; these read SHSESTDSEV and QHEE…ERHG. At S1579 the chain carries Phosphoserine. The stretch at 1607-1662 is one Filaggrin 6 repeat; that stretch reads EEPEFTVHERHGTTHGQIGDTTGHSHSGHGQSTQRGSRTTGRQRSSHSESSDSEVH. Over residues 1627–1649 the composition is skewed to low complexity; that stretch reads TTGHSHSGHGQSTQRGSRTTGRQ. Over residues 1652–1661 the composition is skewed to basic and acidic residues; the sequence is SHSESSDSEV. S1656 and S1657 each carry phosphoserine. Composition is skewed to low complexity over residues 1662-1686 and 1711-1720; these read HSGV…QSES and GLTTQTGSRT. The segment covering 1755–1768 has biased composition (basic and acidic residues); that stretch reads QHGESESIVHERHG. Residues 1757–1812 form a Filaggrin 7 repeat; it reads GESESIVHERHGTIHGQTGDTTRHAHSGHGQSTQTGSRTTGRRSSGHSEYSDSEGH. Over residues 1784–1795 the composition is skewed to low complexity; the sequence is GHGQSTQTGSRT. Residues S1800 and S1807 each carry the phosphoserine modification. Positions 1834–1845 are enriched in basic and acidic residues; it reads GESESIVDERHG. Positions 1849–1873 are enriched in low complexity; that stretch reads GQTGDTSGHSQSGHGQSTQSGSSTT. Positions 1879 to 1888 are enriched in basic and acidic residues; sequence GHSESSDSEV. Residues S1883, S1884, and S1959 each carry the phosphoserine modification. 2 Filaggrin repeats span residues 1928-1964 and 1984-2039; these read DTTE…SEGP and PESG…SEGH. 2 stretches are compositionally biased toward low complexity: residues 1963-1982 and 2013-2022; these read GPSG…AGSH and GQSTQRGSRT. Residue S2034 is modified to Phosphoserine. Low complexity-rich tracts occupy residues 2039-2059, 2114-2125, and 2162-2176; these read HSGV…SQHG, HSGVSHTHSGHT, and HGQS…TGRQ. The stretch at 2134–2189 is one Filaggrin 10 repeat; it reads GESGSAIHGRQGTIHGQTGDTTRHGQSGHGQSTQTGSRTTGRQRSSHSESSDSEVH. The segment covering 2179 to 2190 has biased composition (basic and acidic residues); the sequence is SHSESSDSEVHS. 3 stretches are compositionally biased toward low complexity: residues 2201–2211, 2219–2228, and 2238–2247; these read HSQAGSRHGQS, QGTTHGQTGD, and GQSTQRGSRT. Residues 2273–2288 are compositionally biased toward polar residues; the sequence is GHIQGQAGSQQRQPGS. The span at 2320-2331 shows a compositional bias: low complexity; the sequence is SRSSRASHFQSH. Residues 2367 to 2391 are compositionally biased toward polar residues; sequence SRKSISNSHLSWSTDSTANKQLSRH.

Belongs to the S100-fused protein family. The protein in the N-terminal section; belongs to the S-100 family. Post-translationally, deiminated by PADI1, PADI2 or PADI3 in vitro. The deiminated form is degraded by calpain-1/CAPN1 more quickly and into shorter peptides than the intact protein. In terms of processing, may be processed by calpain-1/CAPN1 in the uppermost epidermal layers. As to expression, expressed in skin, thymus, stomach and placenta, but not detected in heart, brain, liver, lung, bone marrow, small intestine, spleen, prostate, colon, adrenal gland, kidney, pancreas, mammary gland, bladder, thyroid, salivary gland and trachea. Weakly expressed in esophagus, tonsils and testis (at protein level). In the skin, strongly expressed in the upper stratum granulosum and lower stratum corneum, but not detected in the upper stratum corneum (at protein level). In scalp hair follicles, mainly restricted within the granular and cornified cells surrounding the infundibular outer root sheath, with weak expression in central and proximal outer root sheath (at protein level). Tends to be down-regulated in sporiatic lesions compared to non-lesional skin inthe same patients.

It is found in the cytoplasm. The protein resides in the cytoplasmic granule. In terms of biological role, essential for normal cell-cell adhesion in the cornified cell layers. Important for proper integrity and mechanical strength of the stratum corneum of the epidermis. This Homo sapiens (Human) protein is Filaggrin-2 (FLG2).